A 293-amino-acid chain; its full sequence is Shikimate dehydrogenase (NADP(+)) (293 aa).

Residues 26 to 28 (SKS) and threonine 73 each bind shikimate. The active-site Proton acceptor is the lysine 77. Glutamate 89 is an NADP(+) binding site. Positions 98 and 113 each coordinate shikimate. NADP(+)-binding positions include 137–141 (GAGGA), 161–166 (NRTRQR), and isoleucine 231. Tyrosine 233 contacts shikimate. Glycine 254 lines the NADP(+) pocket.

Belongs to the shikimate dehydrogenase family. In terms of assembly, homodimer.

It catalyses the reaction shikimate + NADP(+) = 3-dehydroshikimate + NADPH + H(+). It functions in the pathway metabolic intermediate biosynthesis; chorismate biosynthesis; chorismate from D-erythrose 4-phosphate and phosphoenolpyruvate: step 4/7. Functionally, involved in the biosynthesis of the chorismate, which leads to the biosynthesis of aromatic amino acids. Catalyzes the reversible NADPH linked reduction of 3-dehydroshikimate (DHSA) to yield shikimate (SA). This Bartonella quintana (strain Toulouse) (Rochalimaea quintana) protein is Shikimate dehydrogenase (NADP(+)).